The following is a 161-amino-acid chain: Nucleotide-binding protein Bd0338 (161 aa).

This sequence belongs to the YajQ family.

Nucleotide-binding protein. The protein is Nucleotide-binding protein Bd0338 of Bdellovibrio bacteriovorus (strain ATCC 15356 / DSM 50701 / NCIMB 9529 / HD100).